The primary structure comprises 2639 residues: BAH and coiled-coil domain-containing protein 1 (2639 aa).

Disordered regions lie at residues 23-49 (SAAAAARLAPAGPAAQPPAHFQPGKYF), 84-107 (SAASTHPSGPSSSPPEQAYRGSHP), 188-249 (APAH…GKER), 669-702 (FLSSKGPGQSERPDCARSREHDTTHGDGEVRQPP), 716-746 (VSRSEAAYGTNTARQGRAAPAFKGGGGPRST), 939-1047 (QRAA…QSTA), 1104-1331 (SDVH…HSSG), 1457-1513 (QREL…KKVK), 1582-1666 (KVKS…LGTE), 1722-1776 (EVKI…RDAL), 1868-1893 (FDDNSSFSEEEEDEEEEEEDSGPLSA), and 2057-2119 (KKVS…DHFL). Composition is skewed to low complexity over residues 24 to 41 (AAAAARLAPAGPAAQPPA) and 84 to 98 (SAASTHPSGPSSSPP). Composition is skewed to basic and acidic residues over residues 211 to 247 (GPKDFDRFLVGKELGREKAGKAAEGKERPAAEEDGGK) and 679 to 698 (ERPDCARSREHDTTHGDGEV). Lys-222 carries the N6-acetyllysine modification. Basic and acidic residues predominate over residues 946-964 (RKPEDQHLDLEEPAQEKAP). Over residues 972-988 (ALTPTAPGAPSPAAGPT) the composition is skewed to low complexity. The segment covering 989-1013 (KLPPCCHPPDPKPPASSPTPPPRPS) has biased composition (pro residues). A compositionally biased stretch (polar residues) spans 1106–1122 (VHSSNLEDPETMQTTAP). Low complexity predominate over residues 1182–1198 (LEGLQELQCAALLEAGG). The segment covering 1212–1221 (AREERSREEG) has biased composition (basic and acidic residues). Residues 1244–1275 (LEDEGEQPAPEEDELEEDELGQQSMEDSEEDC) are compositionally biased toward acidic residues. Residues 1307–1324 (DSPPDPQPPAASGPPSTV) show a composition bias toward pro residues. A coiled-coil region spans residues 1439 to 1473 (EVGMRVRLAELQRRYKEKQRELARLQRKHDHERDE). Basic and acidic residues predominate over residues 1457 to 1475 (QRELARLQRKHDHERDESS). The span at 1478-1492 (PARRGPGRPRKRKHS) shows a compositional bias: basic residues. The segment covering 1751–1761 (GKKKAKGKAKG) has biased composition (basic residues). Residues 1868 to 1888 (FDDNSSFSEEEEDEEEEEEDS) are compositionally biased toward acidic residues. Ser-2274 bears the Phosphoserine mark. Disordered regions lie at residues 2317–2336 (SDCHSSFSDEDEDGPGLAAG), 2348–2383 (SSSSSGSSTSSSSGSVSTSSLCSSDNEDSSYSSDDE), and 2432–2472 (GAGS…ENRP). Over residues 2348 to 2371 (SSSSSGSSTSSSSGSVSTSSLCSS) the composition is skewed to low complexity. Residues 2372-2383 (DNEDSSYSSDDE) show a composition bias toward acidic residues. Low complexity predominate over residues 2432 to 2442 (GAGSGPSSSSK). One can recognise a BAH domain in the interval 2513–2633 (ETLRVGDCAV…PTTGRLVTAD (121 aa)).

The chain is BAH and coiled-coil domain-containing protein 1 from Homo sapiens (Human).